Reading from the N-terminus, the 1049-residue chain is Self-sufficient cytochrome P450 monooxygenase CYP505E4 (1049 aa).

Residue Cys405 participates in heme binding. Residues 461–470 (SATALSQHNM) show a composition bias toward polar residues. A disordered region spans residues 461–491 (SATALSQHNMSAGATASPGSSTHLAGDENGQ). Over residues 471–482 (SAGATASPGSST) the composition is skewed to low complexity. The Flavodoxin-like domain occupies 499–640 (ISFFYGSNSG…DLEVWEETNL (142 aa)). FMN is bound by residues 505 to 509 (SNSGT) and 584 to 616 (VFGCGHQDWTKTFYRIPILIDDLMHKAGATRLT). The FAD-binding FR-type domain maps to 678 to 906 (RDLVEGKVTA…RPAKDAFHLP (229 aa)).

This sequence in the N-terminal section; belongs to the cytochrome P450 family. It depends on FAD as a cofactor. FMN is required as a cofactor. Requires heme as cofactor.

The enzyme catalyses 2 oxidized [cytochrome P450] + NADPH = 2 reduced [cytochrome P450] + NADP(+) + H(+). The catalysed reaction is an organic molecule + reduced [NADPH--hemoprotein reductase] + O2 = an alcohol + oxidized [NADPH--hemoprotein reductase] + H2O + H(+). It catalyses the reaction dodecanoate + reduced [NADPH--hemoprotein reductase] + O2 = 5-hydroxydodecanoate + oxidized [NADPH--hemoprotein reductase] + H2O + H(+). It carries out the reaction dodecan-1-ol + reduced [NADPH--hemoprotein reductase] + O2 = 1,5-dodecanediol + oxidized [NADPH--hemoprotein reductase] + H2O + H(+). The enzyme catalyses dodecanoate + reduced [NADPH--hemoprotein reductase] + O2 = 9-hydroxydodecanoate + oxidized [NADPH--hemoprotein reductase] + H2O + H(+). The catalysed reaction is dodecan-1-ol + reduced [NADPH--hemoprotein reductase] + O2 = 1,4-dodecanediol + oxidized [NADPH--hemoprotein reductase] + H2O + H(+). It catalyses the reaction dodecan-1-ol + reduced [NADPH--hemoprotein reductase] + O2 = 1,6-dodecanediol + oxidized [NADPH--hemoprotein reductase] + H2O + H(+). In terms of biological role, self-sufficient cytochrome P450 monooxygenase that catalyzes the regioselective in-chain hydroxylation of alkanes, fatty alcohols, and fatty acids at the omega-7 position. Performs hydroxylation of C10-C16 n-alkanes and C12 and C14 fatty alcohols; and thereby enables the one step biocatalytic synthesis of rare alcohols such as 5-dodecanol and 7-tetradecanol. Converts 1-dodecanol into 1,5-dodecanediol as major product with very little sub-terminally hydroxylated products with the 1,4-dodecanediol and 1,6-dodecanediol more abundant. Converts dodecanoic acid to 5-hydroxydodecanoic acid which can be further converted into delta-dodecalactone by lactonization of the 5-hydroxy acid at low pH. Also gives sub-terminal hydroxylation of dodecanoic acid with 9-hydroxydodecanoic acid being the second most abundant product. Does not show any significant activity toward tetradecanoic acid. The chain is Self-sufficient cytochrome P450 monooxygenase CYP505E4 from Penicillium camemberti (strain FM 013).